The sequence spans 756 residues: LIM domain and actin-binding protein 1 (756 aa).

The residue at position 1 (methionine 1) is an N-acetylmethionine. Phosphoserine occurs at positions 15 and 55. A compositionally biased stretch (basic and acidic residues) spans 44 to 56; sequence AAEEANMEKRRSN. Disordered stretches follow at residues 44 to 183 and 204 to 377; these read AAEE…SNKI and QTKI…AVKK. The segment covering 107–118 has biased composition (low complexity); that stretch reads EVASSSASGVEA. Residue serine 130 is modified to Phosphoserine. The segment covering 140-173 has biased composition (basic and acidic residues); sequence RIKDTEHLKDHSAESKKMENCLAESRHEVGKPET. A Required for interaction with NPC1L1 motif is present at residues 164-166; sequence SRH. Serine 221 is modified (phosphoserine). Tyrosine 225 is modified (phosphotyrosine). 2 positions are modified to phosphoserine: serine 226 and serine 238. Residues 245–254 show a composition bias toward basic and acidic residues; it reads EKSESRRNLE. Serine 259 is modified (phosphoserine). A compositionally biased stretch (polar residues) spans 274–287; that stretch reads VSKQSSSTNYTNEL. Basic and acidic residues predominate over residues 294 to 303; that stretch reads IKTHKLEQKE. Serine 339, serine 346, serine 358, serine 365, and serine 370 each carry phosphoserine. Residues 384–444 form the LIM zinc-binding domain; sequence ETCVECQKTV…KPHFNQLFKS (61 aa). At lysine 435 the chain carries N6-succinyllysine. Residue serine 486 is modified to Phosphoserine. Residues 489 to 509 form a required for interaction with MYO5B region; sequence VEDAPIAKVGVLTASMEAKAS. Positions 508 to 726 are disordered; that stretch reads ASSQLEKEDK…TTQKQKSQDV (219 aa). Over residues 512-523 the composition is skewed to basic and acidic residues; it reads LEKEDKPAETKK. The span at 533–542 shows a compositional bias: low complexity; that stretch reads ELSSSGSALE. The segment covering 552–563 has biased composition (basic and acidic residues); sequence WPPEDEVSKPEA. Serine 597, serine 600, serine 605, and serine 613 each carry phosphoserine. Over residues 627-637 the composition is skewed to basic and acidic residues; it reads AERKQMEKASA. Positions 638 to 651 are enriched in polar residues; the sequence is SEKNGSVGKTTWPS. Residues 652–667 show a composition bias toward basic and acidic residues; sequence KESRGGEAAGRSKEVQ. The segment covering 691–721 has biased composition (polar residues); the sequence is LQQQSPLEPKSKNWSSFADNTSAKEFTTQKQ. Phosphoserine is present on residues serine 695, serine 723, and serine 738.

As to quaternary structure, interacts with NPC1L1; bridges NPC1L1 with MYO5B. Interacts with MYO5B; bridges MYO5B with NPC1L1. Interacts with PXN; this complex stabilizes actin dynamics. Interacts with F-actin and G-actin. Interacts with LUZP1 (via C-terminus); both proteins restrict ciliation and may work together to regulate this process. Binds RAB40B (GTP-bound); interaction influences LIMA1 subcellular localization in lamellipodia during cell migration. Post-translationally, phosphorylation of the C-terminal region by MAPK1/MAPK3 reduces its association with F-actin and contributes to actin filament reorganization and enhances cell motility. Ubiquitinated by the ECS(RAB40B) complex leading to its degradation. As to expression, widely expressed. Highest levels of isoform 2 are expressed in lung, spleen and small intestine. Isoform 2 is expressed at higher levels than isoform 1 in most tissues except liver, fat and kidney. Isoform 1 and isoform 2 are expressed at low levels in skeletal muscle, heart, stomach and lymph.

Its subcellular location is the cytoplasm. The protein resides in the cell junction. It localises to the focal adhesion. The protein localises to the cytoskeleton. It is found in the stress fiber. Its subcellular location is the cell membrane. The protein resides in the cell projection. It localises to the ruffle. The protein localises to the lamellipodium. In terms of biological role, actin-binding protein involved in actin cytoskeleton regulation and dynamics. Increases the number and size of actin stress fibers and inhibits membrane ruffling. Inhibits actin filament depolymerization. Bundles actin filaments, delays filament nucleation and reduces formation of branched filaments. Acts as a negative regulator of primary cilium formation. Plays a role in cholesterol homeostasis. Influences plasma cholesterol levels through regulation of intestinal cholesterol absorption. May act as a scaffold protein by regulating NPC1L1 transportation, an essential protein for cholesterol absorption, to the plasma membrane by recruiting MYO5B to NPC1L1, and thus facilitates cholesterol uptake. This chain is LIM domain and actin-binding protein 1, found in Sus scrofa (Pig).